Reading from the N-terminus, the 175-residue chain is Development-specific protein S homolog (175 aa).

Beta/gamma crystallin 'Greek key' domains follow at residues 2–46 (ANIT…KVPP) and 48–86 (VKAI…KVMS). The interval 87–90 (VPVQ) is connecting peptide. Beta/gamma crystallin 'Greek key' domains are found at residues 91-135 (PRAR…KPEG) and 136-175 (LKVV…RITP).

Belongs to the beta/gamma-crystallin family.

Its subcellular location is the spore. It localises to the perispore. The protein is Development-specific protein S homolog (ops) of Myxococcus xanthus.